The chain runs to 78 residues: Esculentin-2Vb (78 aa).

The signal sequence occupies residues 1 to 22 (MFTMKKSLLLLFFLGTISLSLC). The propeptide occupies 23-39 (EEERGADEEEGDGEKLM). A disulfide bridge links Cys-72 with Cys-78.

As to expression, expressed by the skin glands.

The protein localises to the secreted. In terms of biological role, antimicrobial peptide. In Odorrana versabilis (Chinese bamboo leaf odorous frog), this protein is Esculentin-2Vb.